Reading from the N-terminus, the 110-residue chain is U1-lycotoxin-Ls1cc (110 aa).

An N-terminal signal peptide occupies residues 1–20 (MKFVLLFGVLLVTLFSYSSA). The propeptide occupies 21 to 44 (EMLDDFDQADEDELLSLIEKEEAR). Cystine bridges form between Cys-47-Cys-62, Cys-54-Cys-71, Cys-61-Cys-89, and Cys-73-Cys-87.

This sequence belongs to the neurotoxin 19 (CSTX) family. 03 subfamily. As to expression, expressed by the venom gland.

The protein resides in the secreted. This Lycosa singoriensis (Wolf spider) protein is U1-lycotoxin-Ls1cc.